Consider the following 284-residue polypeptide: Flavin-dependent thymidylate synthase (284 aa).

Residues 27-237 (GFIRVVDYMG…PLAYNAFVEY (211 aa)) enclose the ThyX domain. FAD is bound by residues threonine 73, 96–98 (RHR), and glutamate 104. DUMP contacts are provided by residues 93–96 (QWIR) and 104–108 (EYSAR). Residues 96–106 (RHRTANVNEYS) carry the ThyX motif motif. Residues 122–142 (EQVAKQSDNNKQGSGEAFDPD) are disordered. Residues 125–134 (AKQSDNNKQG) are compositionally biased toward polar residues. Arginine 176 serves as a coordination point for dUMP. FAD contacts are provided by residues 192–194 (DLH) and histidine 198. Arginine 203 serves as a coordination point for dUMP. The active-site Involved in ionization of N3 of dUMP, leading to its activation is arginine 203.

The protein belongs to the thymidylate synthase ThyX family. In terms of assembly, homotetramer. Requires FAD as cofactor.

The enzyme catalyses dUMP + (6R)-5,10-methylene-5,6,7,8-tetrahydrofolate + NADPH + H(+) = dTMP + (6S)-5,6,7,8-tetrahydrofolate + NADP(+). It participates in pyrimidine metabolism; dTTP biosynthesis. Its function is as follows. Catalyzes the reductive methylation of 2'-deoxyuridine-5'-monophosphate (dUMP) to 2'-deoxythymidine-5'-monophosphate (dTMP) while utilizing 5,10-methylenetetrahydrofolate (mTHF) as the methyl donor, and NADPH and FADH(2) as the reductant. This is Flavin-dependent thymidylate synthase from Wolbachia pipientis wMel.